The chain runs to 170 residues: Ubiquitin-conjugating enzyme E2 G1 (170 aa).

At Met1 the chain carries N-acetylmethionine. Thr2 carries the N-acetylthreonine; in Ubiquitin-conjugating enzyme E2 G1, N-terminally processed modification. The 162-residue stretch at 5–166 (QSALLLRRQL…VARCVRKSQE (162 aa)) folds into the UBC core domain. The active-site Glycyl thioester intermediate is the Cys90.

The protein belongs to the ubiquitin-conjugating enzyme family. In terms of processing, autoubiquitinated.

The enzyme catalyses S-ubiquitinyl-[E1 ubiquitin-activating enzyme]-L-cysteine + [E2 ubiquitin-conjugating enzyme]-L-cysteine = [E1 ubiquitin-activating enzyme]-L-cysteine + S-ubiquitinyl-[E2 ubiquitin-conjugating enzyme]-L-cysteine.. It functions in the pathway protein modification; protein ubiquitination. Functionally, accepts ubiquitin from the E1 complex and catalyzes its covalent attachment to other proteins. In vitro catalyzes 'Lys-48'-, as well as 'Lys-63'-linked polyubiquitination. May be involved in degradation of muscle-specific proteins. Mediates polyubiquitination of CYP3A4. The protein is Ubiquitin-conjugating enzyme E2 G1 (UBE2G1) of Macaca fascicularis (Crab-eating macaque).